Reading from the N-terminus, the 972-residue chain is MRGARGAWDFLCVLLLLLRVQTGSSQPSVSPEEASPPFIDPAKSELIVSVGDEIRLFCNDPGFVKWTFEVLDQMNENKQKEWIMQKAEATNTGKYTCTNKHGLSSSIYVFVRDPDKLFLVDRSLYGKEDNDTLVRCPLTDPEVTNYSLKGCQGKPIPKDLRFVPDPKAGITIKNVKRAYHRLCLHCSADRKGQSKLSEKFILKVRPAFKAVPVVSVSKASYLLREGEEFTVTCTIKDVSSSVYSSWKKENSPTKLQEKYNSWHQGDFNYERQATLTISSVRVNDSGVFMCYASNTFGSANVTTTLEVVDKGFINIFPMINTTVFVNDGENVDLIVEYEAFPRPEHQQWIYMNRTFTDKWEDYPKSENESNIRYVSELHLTRLKDTEGGTYTFLVSNSDVSSSIAFTVYVNTKPEILTYDRLMNGMLQCVAAGFPEPTIDWYFCPGTEQRCSAPVLPVDVQIQNTSGPPFGKLVVQSSIDSSAFKHNGTVECKAYNDVGKTSAYFNFAFKEQIQPHTLFTPLLIGFVVVAGMMCIIVMILTYKYLQKPMYEVQWKVVEEINGNNYVYIDPTQLPYDHKWEFPRNRLSFGKTLGAGAFGKVVEATAYGLIKSDTAMTVAVKMLKPSAHLTEREALMSELKVLSYLGNHMNIVNLLGACTIGGPTLVITEYCCYGDLLNFLRRKRDSFICSKQEDHAEAALYKNLLHSKESSCSDSTNEYMDMKPGVSYVVPTKAEKRRSARVGSYIERDVTPAIMEDDELALDLEDLLSFSYQVAKGMAFLASKNCIHRDLAARNILLTHGRITKICDFGLARDIKNDSNYVVKGNARLPVKWMAPESIFNCVYTFESDVWSYGIFLWELFSLGSSPYPGMPVDSKFYKMIKEGFRMLSPEHAPAEMYDIMKTCWDADPLKRPTFKQIVQLIEKQISESTNHIYSNLTNCSPSQQKPVVDHSVRINSVGSTASSSQPLLVRDDV.

The N-terminal stretch at 1 to 25 (MRGARGAWDFLCVLLLLLRVQTGSS) is a signal peptide. The Extracellular segment spans residues 26 to 520 (QPSVSPEEAS…QIQPHTLFTP (495 aa)). Ig-like C2-type domains are found at residues 27 to 112 (PSVS…VFVR), 121 to 205 (DRSL…LKVR), 212 to 308 (PVVS…LEVV), 317 to 410 (PMIN…VYVN), and 413 to 507 (PEIL…FNFA). Cys58 and Cys97 are oxidised to a cystine. N-linked (GlcNAc...) asparagine glycosylation is found at Asn130 and Asn145. Disulfide bonds link Cys136-Cys186, Cys151-Cys183, and Cys233-Cys290. N-linked (GlcNAc...) asparagine glycosylation is found at Asn283, Asn300, Asn320, Asn352, Asn367, Asn463, and Asn486. Cys428 and Cys491 are joined by a disulfide. A helical membrane pass occupies residues 521–541 (LLIGFVVVAGMMCIIVMILTY). At 542–972 (KYLQKPMYEV…SQPLLVRDDV (431 aa)) the chain is on the cytoplasmic side. Phosphotyrosine occurs at positions 543 and 549. Tyr564 provides a ligand contact to Mg(2+). Phosphotyrosine; by autocatalysis is present on residues Tyr564 and Tyr566. An important for interaction with phosphotyrosine-binding proteins region spans residues 564-566 (YVY). The 349-residue stretch at 585–933 (LSFGKTLGAG…ISESTNHIYS (349 aa)) folds into the Protein kinase domain. Residues 592–599 (GAGAFGKV), Lys619, and 667–673 (EYCCYGD) contribute to the ATP site. Residues Tyr699 and Tyr717 each carry the phosphotyrosine; by autocatalysis modification. Tyr726 is modified (phosphotyrosine). Residues Ser737 and Ser742 each carry the phosphoserine; by PKC/PRKCA modification. The active-site Proton acceptor is the Asp788. Arg792 lines the ATP pocket. Asn793 and Asp806 together coordinate Mg(2+). Phosphoserine is present on Ser817. A Phosphotyrosine; by autocatalysis modification is found at Tyr819. At Ser887 the chain carries Phosphoserine. Phosphotyrosine is present on Tyr896. At Tyr932 the chain carries Phosphotyrosine; by autocatalysis. At Ser955 the chain carries Phosphoserine.

This sequence belongs to the protein kinase superfamily. Tyr protein kinase family. CSF-1/PDGF receptor subfamily. As to quaternary structure, monomer in the absence of bound KITLG/SCF. Homodimer in the presence of bound KITLG/SCF, forming a heterotetramer with two KITLG/SCF molecules. Interacts (via phosphorylated tyrosine residues) with the adapter proteins GRB2 and GRB7 (via SH2 domain), and SH2B2/APS. Interacts (via C-terminus) with MPDZ (via the tenth PDZ domain). Interacts (via phosphorylated tyrosine residues) with PIK3R1 and PIK3CD. Interacts (via phosphorylated tyrosine) with CRK (isoform Crk-II), FYN, SHC1 and MATK/CHK (via SH2 domain). Interacts with LYN and FES/FPS. Interacts (via phosphorylated tyrosine residues) with the protein phosphatases PTPN6/SHP-1 (via SH2 domain), PTPN11/SHP-2 (via SH2 domain) and PTPRU. Interacts with PLCG1. Interacts with DOK1 and TEC. Interacts with IL1RAP (independent of stimulation with KITLG/SCF). A mast cell-specific KITLG/SCF-induced interleukin-33 signaling complex contains IL1RL1, IL1RAP, KIT and MYD88. In terms of processing, ubiquitinated by SOCS6. KIT is rapidly ubiquitinated after autophosphorylation induced by KITLG/SCF binding, leading to internalization and degradation. Autophosphorylated on tyrosine residues. KITLG/SCF binding promotes autophosphorylation. Phosphorylated tyrosine residues are important for interaction with specific binding partners.

It localises to the cell membrane. It carries out the reaction L-tyrosyl-[protein] + ATP = O-phospho-L-tyrosyl-[protein] + ADP + H(+). With respect to regulation, present in an inactive conformation in the absence of bound ligand. KITLG/SCF binding leads to dimerization and activation by autophosphorylation on tyrosine residues. Activity is down-regulated by PRKCA-mediated phosphorylation on serine residues. Functionally, tyrosine-protein kinase that acts as a cell-surface receptor for the cytokine KITLG/SCF and plays an essential role in the regulation of cell survival and proliferation, hematopoiesis, stem cell maintenance, gametogenesis, mast cell development, migration and function, and in melanogenesis. In response to KITLG/SCF binding, KIT can activate several signaling pathways. Phosphorylates PIK3R1, PLCG1, SH2B2/APS and CBL. Activates the AKT1 signaling pathway by phosphorylation of PIK3R1, the regulatory subunit of phosphatidylinositol 3-kinase. Activated KIT also transmits signals via GRB2 and activation of RAS, RAF1 and the MAP kinases MAPK1/ERK2 and/or MAPK3/ERK1. Promotes activation of STAT family members STAT1, STAT3, STAT5A and STAT5B. Activation of PLCG1 leads to the production of the cellular signaling molecules diacylglycerol and inositol 1,4,5-trisphosphate. KIT signaling is modulated by protein phosphatases, and by rapid internalization and degradation of the receptor. Activated KIT promotes phosphorylation of the protein phosphatases PTPN6/SHP-1 and PTPRU, and of the transcription factors STAT1, STAT3, STAT5A and STAT5B. Promotes phosphorylation of PIK3R1, CBL, CRK (isoform Crk-II), LYN, MAPK1/ERK2 and/or MAPK3/ERK1, PLCG1, SRC and SHC1. This Callithrix jacchus (White-tufted-ear marmoset) protein is Mast/stem cell growth factor receptor Kit (KIT).